A 68-amino-acid chain; its full sequence is Protein P34 (68 aa).

Helical transmembrane passes span 4–24 and 41–61; these read FVGP…LAVL and GFSS…GFAM.

The protein resides in the virion membrane. In Acinetobacter calcoaceticus (Arthrobacter siderocapsulatus), this protein is Protein P34 (XXXIV).